The chain runs to 559 residues: Nicotinate phosphoribosyltransferase 1 (559 aa).

Nicotinate-binding residues include Y33 and T221. The residue at position 224 (H224) is a Phosphohistidine. A nicotinate-binding site is contributed by R331. 5-phospho-alpha-D-ribose 1-diphosphate is bound at residue T393.

It belongs to the NAPRTase family. Mg(2+) serves as cofactor. Mn(2+) is required as a cofactor. In terms of processing, transiently phosphorylated on a His residue during the reaction cycle. Phosphorylation strongly increases the affinity for substrates and increases the rate of nicotinate D-ribonucleotide production. Dephosphorylation regenerates the low-affinity form of the enzyme, leading to product release.

The enzyme catalyses nicotinate + 5-phospho-alpha-D-ribose 1-diphosphate + ATP + H2O = nicotinate beta-D-ribonucleotide + ADP + phosphate + diphosphate. The protein operates within cofactor biosynthesis; NAD(+) biosynthesis; nicotinate D-ribonucleotide from nicotinate: step 1/1. Functionally, catalyzes the first step in the biosynthesis of NAD from nicotinic acid, the ATP-dependent synthesis of beta-nicotinate D-ribonucleotide from nicotinate and 5-phospho-D-ribose 1-phosphate. Helps prevent cellular oxidative stress via its role in NAD biosynthesis. This is Nicotinate phosphoribosyltransferase 1 from Arabidopsis thaliana (Mouse-ear cress).